A 278-amino-acid polypeptide reads, in one-letter code: Potassium/proton antiporter CemA (278 aa).

The next 4 membrane-spanning stretches (helical) occupy residues 60–80 (YLLL…SFVF), 155–175 (AMKN…LIVT), 201–221 (FLII…GWEV), and 239–259 (IFLF…YWIF).

The protein belongs to the CemA family.

It is found in the plastid. Its subcellular location is the chloroplast inner membrane. The enzyme catalyses K(+)(in) + H(+)(out) = K(+)(out) + H(+)(in). Functionally, contributes to K(+)/H(+) antiport activity by supporting proton efflux to control proton extrusion and homeostasis in chloroplasts in a light-dependent manner to modulate photosynthesis. Prevents excessive induction of non-photochemical quenching (NPQ) under continuous-light conditions. Indirectly promotes efficient inorganic carbon uptake into chloroplasts. This Rhodomonas salina (Cryptomonas salina) protein is Potassium/proton antiporter CemA.